Here is a 161-residue protein sequence, read N- to C-terminus: Ubiquitin D (161 aa).

Ubiquitin-like domains are found at residues 3–77 (SCVC…LKVV) and 86–159 (LSLV…AHCI).

The protein belongs to the ubiquitin D family. In terms of assembly, interacts directly with the 26S proteasome. Interacts with NUB1; this interaction facilitates the linking of UBD-conjugated target protein to the proteasome complex and accelerates its own degradation and that of its conjugates. Interacts (via ubiquitin-like 1 domain) with the spindle checkpoint protein MAD2L1 during mitosis. Present in aggresomes of proteasome inhibited cells. Interacts with HDAC6 under proteasome impairment conditions. Forms a thioester with UBA6 in cells stimulated with tumor necrosis factor-alpha (TNFa) and interferon-gamma (IFNg). Interacts with SQSTM1 and TP53/p53. Can be acetylated.

The protein resides in the nucleus. Its subcellular location is the cytoplasm. Functionally, ubiquitin-like protein modifier which can be covalently attached to target proteins and subsequently leads to their degradation by the 26S proteasome, in a NUB1-dependent manner. Conjugation to the target protein is activated by UBA6 via adenylation of its C-terminal glycine. Probably functions as a survival factor. Promotes the expression of the proteasome subunit beta type-9 (PSMB9/LMP2). Regulates TNF-alpha-induced and LPS-mediated activation of the central mediator of innate immunity NF-kappa-B by promoting TNF-alpha-mediated proteasomal degradation of ubiquitinated-I-kappa-B-alpha. Required for TNF-alpha-induced p65 nuclear translocation in renal tubular epithelial cells (RTECs). May be involved in dendritic cell (DC) maturation, the process by which immature dendritic cells differentiate into fully competent antigen-presenting cells that initiate T-cell responses. Mediates mitotic non-disjunction and chromosome instability, in long-term in vitro culture and cancers, by abbreviating mitotic phase and impairing the kinetochore localization of MAD2L1 during the prometaphase stage of the cell cycle. May be involved in the formation of aggresomes when proteasome is saturated or impaired. Mediates apoptosis in a caspase-dependent manner, especially in renal epithelium and tubular cells during renal diseases. The chain is Ubiquitin D (Ubd) from Rattus norvegicus (Rat).